We begin with the raw amino-acid sequence, 434 residues long: GTPase Obg (434 aa).

The region spanning 2–160 (PTFVDQTKIE…RVLRLELKLL (159 aa)) is the Obg domain. The region spanning 161–334 (ADVGLVGFPS…LMNDTATLVE (174 aa)) is the OBG-type G domain. GTP is bound by residues 167–174 (GFPSVGKS), 192–196 (FTTLT), 214–217 (DLPG), 284–287 (SQMD), and 315–317 (SSV). Mg(2+)-binding residues include Ser174 and Thr194. The region spanning 356–434 (YKAPQKNEFT…IGKFVFEFVQ (79 aa)) is the OCT domain.

The protein belongs to the TRAFAC class OBG-HflX-like GTPase superfamily. OBG GTPase family. In terms of assembly, monomer. Mg(2+) serves as cofactor.

It is found in the cytoplasm. In terms of biological role, an essential GTPase which binds GTP, GDP and possibly (p)ppGpp with moderate affinity, with high nucleotide exchange rates and a fairly low GTP hydrolysis rate. Plays a role in control of the cell cycle, stress response, ribosome biogenesis and in those bacteria that undergo differentiation, in morphogenesis control. The sequence is that of GTPase Obg from Lactobacillus helveticus (strain DPC 4571).